We begin with the raw amino-acid sequence, 150 residues long: Cell division protein SepF (150 aa).

The protein belongs to the SepF family. As to quaternary structure, homodimer. Interacts with FtsZ.

The protein resides in the cytoplasm. Cell division protein that is part of the divisome complex and is recruited early to the Z-ring. Probably stimulates Z-ring formation, perhaps through the cross-linking of FtsZ protofilaments. Its function overlaps with FtsA. The chain is Cell division protein SepF from Clostridium botulinum (strain Kyoto / Type A2).